Here is a 463-residue protein sequence, read N- to C-terminus: Polyadenylate-binding protein-interacting protein 1 (463 aa).

The disordered stretch occupies residues 1–86 (MSDGFERAPG…HKRTSPAAQL (86 aa)). One can recognise an MIF4G domain in the interval 145–362 (TEYVQDFLNH…LKLVELRSSN (218 aa)). A disordered region spans residues 420-442 (RDYDENGTDGGDSYFEDDDDNEM). Over residues 433-442 (YFEDDDDNEM) the composition is skewed to acidic residues.

As to quaternary structure, interacts with the RRM1-RRM2 and C-terminal regions of epabp.

The protein resides in the cytoplasm. Acts as a coactivator in the regulation of translation initiation of poly(A)-containing mRNAs. The sequence is that of Polyadenylate-binding protein-interacting protein 1 from Xenopus laevis (African clawed frog).